Here is a 96-residue protein sequence, read N- to C-terminus: uncharacterized protein (96 aa).

Positions 9-86 (EELKSQAQVY…NKYADTVAER (78 aa)) form a coiled coil.

The protein belongs to the WXG100 family. sagEsxA-like subfamily.

This is an uncharacterized protein from Clostridium acetobutylicum (strain ATCC 824 / DSM 792 / JCM 1419 / IAM 19013 / LMG 5710 / NBRC 13948 / NRRL B-527 / VKM B-1787 / 2291 / W).